A 401-amino-acid chain; its full sequence is Beta-ketoadipyl-CoA thiolase (401 aa).

The active-site Acyl-thioester intermediate is Cys91. Active-site proton acceptor residues include His357 and Cys387.

It belongs to the thiolase-like superfamily. Thiolase family. In terms of assembly, homotetramer.

The catalysed reaction is succinyl-CoA + acetyl-CoA = 3-oxoadipyl-CoA + CoA. Its pathway is aromatic compound metabolism; beta-ketoadipate pathway; acetyl-CoA and succinyl-CoA from 3-oxoadipate: step 2/2. Catalyzes thiolytic cleavage of beta-ketoadipyl-CoA to succinyl-CoA and acetyl-CoA. This Pseudomonas knackmussii (strain DSM 6978 / CCUG 54928 / LMG 23759 / B13) protein is Beta-ketoadipyl-CoA thiolase (pcaF).